The chain runs to 261 residues: Indole-3-glycerol phosphate synthase (261 aa).

Belongs to the TrpC family.

It carries out the reaction 1-(2-carboxyphenylamino)-1-deoxy-D-ribulose 5-phosphate + H(+) = (1S,2R)-1-C-(indol-3-yl)glycerol 3-phosphate + CO2 + H2O. It participates in amino-acid biosynthesis; L-tryptophan biosynthesis; L-tryptophan from chorismate: step 4/5. The chain is Indole-3-glycerol phosphate synthase from Campylobacter curvus (strain 525.92).